Reading from the N-terminus, the 861-residue chain is Importin subunit beta-1 (861 aa).

Residue S2 is modified to N-acetylserine. HEAT repeat units follow at residues 3-35, 37-66, 90-129, 134-164, 177-208, 219-255, 260-306, 317-362, 367-395, 402-442, 452-484, 496-530, 536-586, 592-629, 634-669, 675-713, 718-764, 773-812, and 819-859; these read TAEF…LSND, FLQF…LTLK, PEAK…ELPH, ELMK…YMCE, SNNI…LADS, EGER…MSLY, KPYM…ELAQ, FALS…AQNC, LEPV…AFGS, KVQR…ADSV, LPGV…VEQL, YPAL…MVEY, AETS…VIRK, EPVA…AASL, EKYL…ISNS, RRYS…ASNI, IPYL…IVAG, FPYV…IAAM, and KQFY…KRQL. Residues 25–106 form the Importin N-terminal domain; the sequence is SETQLKKLSN…KTNALTALVS (82 aa). S836 is subject to Phosphoserine.

The protein belongs to the importin beta family. Importin beta-1 subfamily. As to quaternary structure, forms a complex with the importin alpha subunit (SRP1/KAP60). Interacts with Ran (GSP1); interacts specifically with the GTP-bound form of Ran (GTP-Ran), protecting it from GTP hydrolysis and nucleotide exchange. Interacts with nucleoporin NUP1.

The protein resides in the cytoplasm. It is found in the nucleus. It localises to the nuclear pore complex. Functionally, importin beta subunit that functions in nuclear protein import through association with the importin alpha subunit, which binds to the classical nuclear localization signal (cNLS) in cargo substrates. Docking of the importin/substrate complex to the nuclear pore complex (NPC) is mediated by importin beta through binding to nucleoporin FxFG repeats and the complex is subsequently translocated through the pore by an energy requiring, Ran-dependent mechanism. At the nucleoplasmic side of the NPC, GTP-Ran binds to importin beta and the three components separate, leading to release of the cargo. Importin alpha and beta are re-exported from the nucleus to the cytoplasm where GTP hydrolysis releases Ran from importin beta. The directionality of nuclear import is thought to be conferred by an asymmetric distribution of the GTP- and GDP-bound forms of Ran between the cytoplasm and nucleus. Mediates the nuclear import of histones H2A and H2B. Mediates the nuclear import of transcription factor GCN4. This is Importin subunit beta-1 from Saccharomyces cerevisiae (strain ATCC 204508 / S288c) (Baker's yeast).